Reading from the N-terminus, the 266-residue chain is Receptor-like protein 5 (266 aa).

The signal sequence occupies residues 1 to 19 (MINYRHIVFCLCVMVVVDS). Residues 20–169 (RLTPYLAAIE…PTRNKNKPTV (150 aa)) lie on the Extracellular side of the membrane. LRR repeat units lie at residues 93-117 (LTSL…ITKL) and 119-143 (NLTI…IVIL). N-linked (GlcNAc...) asparagine glycosylation is present at N119. Residues 170–190 (LVLLLGILVGLVVAGGASFGF) form a helical membrane-spanning segment. At 191 to 266 (YLYRIRKQPK…TNQNPHLPYM (76 aa)) the chain is on the cytoplasmic side.

Belongs to the RLP family.

The protein resides in the cell membrane. The chain is Receptor-like protein 5 from Arabidopsis thaliana (Mouse-ear cress).